We begin with the raw amino-acid sequence, 67 residues long: Large ribosomal subunit protein uL29 (67 aa).

The protein belongs to the universal ribosomal protein uL29 family.

The polypeptide is Large ribosomal subunit protein uL29 (rpmC) (Halalkalibacterium halodurans (strain ATCC BAA-125 / DSM 18197 / FERM 7344 / JCM 9153 / C-125) (Bacillus halodurans)).